The following is a 977-amino-acid chain: Poly [ADP-ribose] polymerase 1 (977 aa).

2 consecutive PARP-type zinc fingers follow at residues Trp-8–Pro-91 and Cys-104–Ala-179. Positions 20, 23, 52, 55, 116, 119, 141, and 144 each coordinate Zn(2+). 2 disordered regions span residues Lys-177–Ile-199 and Asp-218–Glu-237. Positions Asp-227–Pro-365 constitute a PADR1 zinc-binding domain. The SAP domain maps to Lys-254–Met-288. Positions Gly-291 to Lys-335 are zinc ribbon. Residues Cys-296, Cys-299, Cys-312, and Cys-322 each coordinate Zn(2+). The BRCT domain occupies Ser-381–Val-473. In terms of domain architecture, WGR spans Thr-504–Phe-604. Residues Lys-626–Gly-745 form the PARP alpha-helical domain. The PARP catalytic domain occupies Glu-752 to Arg-977.

It belongs to the ARTD/PARP family.

The protein resides in the nucleus. It carries out the reaction NAD(+) + (ADP-D-ribosyl)n-acceptor = nicotinamide + (ADP-D-ribosyl)n+1-acceptor + H(+).. It catalyses the reaction L-aspartyl-[protein] + NAD(+) = 4-O-(ADP-D-ribosyl)-L-aspartyl-[protein] + nicotinamide. The catalysed reaction is L-glutamyl-[protein] + NAD(+) = 5-O-(ADP-D-ribosyl)-L-glutamyl-[protein] + nicotinamide. Functionally, involved in the base excision repair (BER) pathway, by catalyzing the poly(ADP-ribosyl)ation of a limited number of acceptor proteins involved in chromatin architecture and in DNA metabolism. This modification follows DNA damages and appears as an obligatory step in a detection/signaling pathway leading to the reparation of DNA strand breaks. This is Poly [ADP-ribose] polymerase 1 (PARP1) from Oryza sativa subsp. japonica (Rice).